The chain runs to 230 residues: Proteasome subunit beta 2 (230 aa).

Positions 1 to 10 (MHDPENRLTD) are enriched in basic and acidic residues. A disordered region spans residues 1–29 (MHDPENRLTDAYEPEVGNLPNEDSGRDEE). Positions 1–35 (MHDPENRLTDAYEPEVGNLPNEDSGRDEENVVKTG) are cleaved as a propeptide — removed in mature form; by autocatalysis. Threonine 36 serves as the catalytic Nucleophile.

It belongs to the peptidase T1B family. As to quaternary structure, the 20S proteasome core is composed of 14 alpha and 14 beta subunits that assemble into four stacked heptameric rings, resulting in a barrel-shaped structure. The two inner rings, each composed of seven catalytic beta subunits, are sandwiched by two outer rings, each composed of seven alpha subunits. The catalytic chamber with the active sites is on the inside of the barrel. Has a gated structure, the ends of the cylinder being occluded by the N-termini of the alpha-subunits. Is capped at one or both ends by the proteasome regulatory ATPase, PAN.

The protein localises to the cytoplasm. It catalyses the reaction Cleavage of peptide bonds with very broad specificity.. The formation of the proteasomal ATPase PAN-20S proteasome complex, via the docking of the C-termini of PAN into the intersubunit pockets in the alpha-rings, triggers opening of the gate for substrate entry. Interconversion between the open-gate and close-gate conformations leads to a dynamic regulation of the 20S proteasome proteolysis activity. Functionally, component of the proteasome core, a large protease complex with broad specificity involved in protein degradation. This chain is Proteasome subunit beta 2, found in Haloarcula marismortui (strain ATCC 43049 / DSM 3752 / JCM 8966 / VKM B-1809) (Halobacterium marismortui).